A 286-amino-acid chain; its full sequence is Pantothenate synthetase (286 aa).

Position 30–37 (30–37 (MGNLHEGH)) interacts with ATP. H37 serves as the catalytic Proton donor. A (R)-pantoate-binding site is contributed by Q64. Residue Q64 coordinates beta-alanine. Residue 151–154 (GKKD) participates in ATP binding. Residue Q157 participates in (R)-pantoate binding. ATP-binding positions include L180 and 188–191 (LSSR).

It belongs to the pantothenate synthetase family. In terms of assembly, homodimer.

Its subcellular location is the cytoplasm. The enzyme catalyses (R)-pantoate + beta-alanine + ATP = (R)-pantothenate + AMP + diphosphate + H(+). It participates in cofactor biosynthesis; (R)-pantothenate biosynthesis; (R)-pantothenate from (R)-pantoate and beta-alanine: step 1/1. Functionally, catalyzes the condensation of pantoate with beta-alanine in an ATP-dependent reaction via a pantoyl-adenylate intermediate. The protein is Pantothenate synthetase of Leptothrix cholodnii (strain ATCC 51168 / LMG 8142 / SP-6) (Leptothrix discophora (strain SP-6)).